A 139-amino-acid polypeptide reads, in one-letter code: Putative pre-16S rRNA nuclease (139 aa).

Belongs to the YqgF nuclease family.

Its subcellular location is the cytoplasm. Functionally, could be a nuclease involved in processing of the 5'-end of pre-16S rRNA. The chain is Putative pre-16S rRNA nuclease from Streptococcus pyogenes serotype M2 (strain MGAS10270).